The chain runs to 368 residues: Dual-specificity RNA methyltransferase RlmN (368 aa).

Glu94 functions as the Proton acceptor in the catalytic mechanism. The Radical SAM core domain occupies 100–334; the sequence is EEDRATLCVS…VIVRKTRGDD (235 aa). Cysteines 107 and 339 form a disulfide. [4Fe-4S] cluster-binding residues include Cys114, Cys118, and Cys121. S-adenosyl-L-methionine-binding positions include 163 to 164, Ser195, 217 to 219, and Asn296; these read GE and SLH. Residue Cys339 is the S-methylcysteine intermediate of the active site.

This sequence belongs to the radical SAM superfamily. RlmN family. [4Fe-4S] cluster serves as cofactor.

The protein localises to the cytoplasm. It catalyses the reaction adenosine(2503) in 23S rRNA + 2 reduced [2Fe-2S]-[ferredoxin] + 2 S-adenosyl-L-methionine = 2-methyladenosine(2503) in 23S rRNA + 5'-deoxyadenosine + L-methionine + 2 oxidized [2Fe-2S]-[ferredoxin] + S-adenosyl-L-homocysteine. The enzyme catalyses adenosine(37) in tRNA + 2 reduced [2Fe-2S]-[ferredoxin] + 2 S-adenosyl-L-methionine = 2-methyladenosine(37) in tRNA + 5'-deoxyadenosine + L-methionine + 2 oxidized [2Fe-2S]-[ferredoxin] + S-adenosyl-L-homocysteine. Specifically methylates position 2 of adenine 2503 in 23S rRNA and position 2 of adenine 37 in tRNAs. m2A2503 modification seems to play a crucial role in the proofreading step occurring at the peptidyl transferase center and thus would serve to optimize ribosomal fidelity. This chain is Dual-specificity RNA methyltransferase RlmN, found in Aeromonas salmonicida (strain A449).